A 163-amino-acid polypeptide reads, in one-letter code: Small ribosomal subunit protein uS9 (163 aa).

The segment at 1–41 (MAENTNDSAVLETEEELTSYTTETNAGAGTGTSTIAPGYGT) is disordered. The segment covering 18–38 (TSYTTETNAGAGTGTSTIAPG) has biased composition (low complexity).

Belongs to the universal ribosomal protein uS9 family.

In Bifidobacterium adolescentis (strain ATCC 15703 / DSM 20083 / NCTC 11814 / E194a), this protein is Small ribosomal subunit protein uS9.